Reading from the N-terminus, the 282-residue chain is Cyanocobalamin reductase / alkylcobalamin dealkylase (282 aa).

Residues aspartate 104, 115-118, 129-131, cysteine 149, and isoleucine 160 contribute to the substrate site; these read ILAQ and YYQ. The tract at residues 234-282 is disordered; sequence LGLAQPSEKPSSPSPDLPFTTPAPKKPGNPSRARSWLSPRVSPPASPGP. Phosphoserine is present on residues serine 245, serine 247, serine 275, and serine 279.

Belongs to the MMACHC family. As to quaternary structure, monomer in the absence of bound substrate. Homodimer; dimerization is triggered by binding to FMN or adenosylcobalamin. Interacts with LMBRD1 and ABCD4; the interaction ensures the transport of cobalamin from the lysosome to the cytoplasm. Forms a multiprotein complex with MMADHC, MTR and MTRR; the interaction with MTR could modulate MMACHC-dependent processing of cobalamin. Heterodimer with MMADHC; the interaction might play a role in the regulation of the balance between AdoCbl and MeCbl synthesis. FAD serves as cofactor. Requires FMN as cofactor. In terms of tissue distribution, widely expressed. Expressed at higher level in fetal liver. Also expressed in spleen, lymph node, thymus and bone marrow. Weakly or not expressed in peripheral blood leukocytes.

It is found in the cytoplasm. The protein localises to the cytosol. The enzyme catalyses 2 cob(II)alamin-[cyanocobalamin reductase] + 2 hydrogen cyanide + NADP(+) = 2 cyanocob(III)alamin + 2 apo-[cyanocobalamin reductase] + NADPH + H(+). It carries out the reaction apo-[alkylcobalamin reductase] + an R-cob(III)alamin + glutathione = cob(I)alamin-[alkylcobalamin reductase] + an S-substituted glutathione + H(+). The catalysed reaction is apo-[alkylcobalamin reductase] + methylcob(III)alamin + glutathione = S-methyl glutathione + cob(I)alamin-[alkylcobalamin reductase] + H(+). It catalyses the reaction apo-[alkylcobalamin reductase] + adenosylcob(III)alamin + glutathione = S-adenosylglutathione + cob(I)alamin-[alkylcobalamin reductase] + H(+). In terms of biological role, cobalamin (vitamin B12) cytosolic chaperone that catalyzes the reductive decyanation of cyanocob(III)alamin (cyanocobalamin, CNCbl) to yield cob(II)alamin and cyanide, using FAD or FMN as cofactors and NADPH as cosubstrate. Cyanocobalamin constitutes the inactive form of vitamin B12 introduced from the diet, and is converted into the active cofactors methylcobalamin (MeCbl) involved in methionine biosynthesis, and 5'-deoxyadenosylcobalamin (AdoCbl) involved in the TCA cycle. Forms a complex with the lysosomal transporter ABCD4 and its chaperone LMBRD1, to transport cobalamin across the lysosomal membrane into the cytosol. The processing of cobalamin in the cytosol occurs in a multiprotein complex composed of at least MMACHC, MMADHC, MTRR (methionine synthase reductase) and MTR (methionine synthase) which may contribute to shuttle safely and efficiently cobalamin towards MTR in order to produce methionine. Also acts as a glutathione transferase by catalyzing the dealkylation of the alkylcob(III)alamins MeCbl and AdoCbl, using the thiolate of glutathione for nucleophilic displacement to generate cob(I)alamin and the corresponding glutathione thioether. The conversion of incoming MeCbl or AdoCbl into a common intermediate cob(I)alamin is necessary to meet the cellular needs for both cofactors. Cysteine and homocysteine cannot substitute for glutathione in this reaction. The chain is Cyanocobalamin reductase / alkylcobalamin dealkylase from Homo sapiens (Human).